The sequence spans 89 residues: Small ribosomal subunit protein bS20 (89 aa).

A disordered region spans residues 1–27 (MANIKSAKKDSIISEERRKKNASQRSK). Residues 7–18 (AKKDSIISEERR) show a composition bias toward basic and acidic residues.

This sequence belongs to the bacterial ribosomal protein bS20 family.

Binds directly to 16S ribosomal RNA. In Buchnera aphidicola subsp. Schizaphis graminum (strain Sg), this protein is Small ribosomal subunit protein bS20.